The following is a 186-amino-acid chain: ATP synthase subunit delta (186 aa).

It belongs to the ATPase delta chain family. In terms of assembly, F-type ATPases have 2 components, F(1) - the catalytic core - and F(0) - the membrane proton channel. F(1) has five subunits: alpha(3), beta(3), gamma(1), delta(1), epsilon(1). F(0) has three main subunits: a(1), b(2) and c(10-14). The alpha and beta chains form an alternating ring which encloses part of the gamma chain. F(1) is attached to F(0) by a central stalk formed by the gamma and epsilon chains, while a peripheral stalk is formed by the delta and b chains.

The protein localises to the cell membrane. Functionally, f(1)F(0) ATP synthase produces ATP from ADP in the presence of a proton or sodium gradient. F-type ATPases consist of two structural domains, F(1) containing the extramembraneous catalytic core and F(0) containing the membrane proton channel, linked together by a central stalk and a peripheral stalk. During catalysis, ATP synthesis in the catalytic domain of F(1) is coupled via a rotary mechanism of the central stalk subunits to proton translocation. This protein is part of the stalk that links CF(0) to CF(1). It either transmits conformational changes from CF(0) to CF(1) or is implicated in proton conduction. This Wolbachia sp. subsp. Brugia malayi (strain TRS) protein is ATP synthase subunit delta.